A 97-amino-acid chain; its full sequence is Plasmid stability protein StbC (97 aa).

Its function is as follows. Involved in plasmid stability. In Pseudomonas syringae pv. tomato (strain ATCC BAA-871 / DC3000), this protein is Plasmid stability protein StbC (stbC).